Reading from the N-terminus, the 259-residue chain is Cysteine protease IpaJ (259 aa).

Residues Cys-64, His-206, and Asp-218 contribute to the active site.

It localises to the secreted. It is found in the host cytoplasm. Virulence factor that eliminates N-myristoyl protein modifications in infected host cells. Acts as a cysteine protease that cleaves the peptide bond between N-myristoylated Gly-2 and Asn-3 of human ARF1, leading to the elimination of the myristoyl group and alteration of protein trafficking in host cell. Could also cleave an array of N-myristoylated host proteins involved in cellular growth, signal transduction, autophagasome maturation and organelle function. The polypeptide is Cysteine protease IpaJ (ipaJ) (Shigella flexneri).